Here is a 327-residue protein sequence, read N- to C-terminus: GTPase Obg (327 aa).

Residues Met-1–Leu-159 form the Obg domain. The OBG-type G domain occupies Ala-160–Ile-327. ATP contacts are provided by residues Gly-166–Ser-173, Phe-191–Ile-195, Asp-213–Gly-216, Asn-280–Glu-283, and Ser-309–Ser-311. 2 residues coordinate Mg(2+): Ser-173 and Thr-193.

Belongs to the TRAFAC class OBG-HflX-like GTPase superfamily. OBG GTPase family. In terms of assembly, monomer. Mg(2+) serves as cofactor.

The protein resides in the cytoplasm. In terms of biological role, an essential GTPase which binds GTP, GDP and possibly (p)ppGpp with moderate affinity, with high nucleotide exchange rates and a fairly low GTP hydrolysis rate. Plays a role in control of the cell cycle, stress response, ribosome biogenesis and in those bacteria that undergo differentiation, in morphogenesis control. The polypeptide is GTPase Obg (Prochlorococcus marinus (strain MIT 9312)).